Here is an 82-residue protein sequence, read N- to C-terminus: Cytochrome c oxidase-assembly factor cox-23, mitochondrial (82 aa).

The segment at Met1 to Glu27 is disordered. The span at Glu7 to Glu27 shows a compositional bias: basic and acidic residues. Positions Leu29 to Arg71 constitute a CHCH domain. Short sequence motifs (cx9C motif) lie at residues Cys32 to Cys42 and Cys53 to Cys63. 2 disulfides stabilise this stretch: Cys32–Cys63 and Cys42–Cys53.

Belongs to the COX23 family.

It is found in the mitochondrion intermembrane space. Functionally, required for the assembly of cytochrome c oxidase. This is Cytochrome c oxidase-assembly factor cox-23, mitochondrial (cox-23) from Neurospora crassa (strain ATCC 24698 / 74-OR23-1A / CBS 708.71 / DSM 1257 / FGSC 987).